We begin with the raw amino-acid sequence, 144 residues long: Large ribosomal subunit protein uL15 (144 aa).

Residues 1–58 form a disordered region; that stretch reads MRLNELAPEPGSRPSAKRVGRGIGSGLGKTGGRGHKGLKSRSGGSVAPGFEGGQQPLA. Residues 21-31 are compositionally biased toward gly residues; the sequence is RGIGSGLGKTG.

It belongs to the universal ribosomal protein uL15 family. In terms of assembly, part of the 50S ribosomal subunit.

Its function is as follows. Binds to the 23S rRNA. This Marinobacter nauticus (strain ATCC 700491 / DSM 11845 / VT8) (Marinobacter aquaeolei) protein is Large ribosomal subunit protein uL15.